Reading from the N-terminus, the 1599-residue chain is Lacto-N-biosidase (1599 aa).

The tat-type signal signal peptide spans 1–30; that stretch reads MTSRQGRQAIAATAAMGVAVALALPTAAFA. Residue histidine 150 participates in beta-D-galactosyl-(1-&gt;3)-N-acetyl-D-glucosamine binding. 6 PbH1 repeats span residues 165-190, 224-255, 277-299, 325-347, 348-388, and 389-437; these read VSYI…DTWK, MSNV…YFMA, FDHV…AVGY, STNV…TLMY, CDRP…WPWR, and CKDP…SFAS. Aspartate 178, aspartate 179, valine 182, and aspartate 238 together coordinate Ca(2+). Residues lysine 244 and histidine 245 each coordinate beta-D-galactosyl-(1-&gt;3)-N-acetyl-D-glucosamine. The beta-D-galactosyl-(1-&gt;3)-N-acetyl-D-glucosamine site is built by tryptophan 387, aspartate 411, aspartate 418, and cysteine 441. Catalysis depends on aspartate 411, which acts as the Proton donor/acceptor. The Nucleophile role is filled by aspartate 418. A PbH1 7 repeat occupies 469–506; sequence GPGNHIYNNTVYVDADSQVLTKRSNSQSLFENNIFINA. An FIVAR domain is found at 1436–1498; it reads DKSTLKATVE…NALRDAIDGL (63 aa). Positions 1494 to 1509 are enriched in basic and acidic residues; it reads AIDGLEKKPVDPDPNP. Positions 1494–1568 are disordered; it reads AIDGLEKKPV…DGATTGGKLT (75 aa). Gly residues predominate over residues 1535–1558; it reads DGSGNGSGTGNGSGSGNGSTGSGS. A compositionally biased stretch (low complexity) spans 1559 to 1568; it reads DGATTGGKLT. Residues 1574–1594 form a helical membrane-spanning segment; sequence VAGAAAMVALTAAAGIGLAAA.

This sequence belongs to the glycosyl hydrolase 136 (GH136) family. As to quaternary structure, homodimer. Ca(2+) is required as a cofactor. Mg(2+) serves as cofactor. Predicted to be exported by the Tat system. The position of the signal peptide cleavage has not been experimentally proven.

It is found in the cell membrane. It catalyses the reaction beta-D-Gal-(1-&gt;3)-beta-D-GlcNAc-(1-&gt;3)-beta-D-Gal-(1-&gt;4)-D-Glc + H2O = beta-D-galactosyl-(1-&gt;3)-N-acetyl-D-glucosamine + lactose. Its activity is regulated as follows. Requires the chaperone LnbY for its proper folding and active expression. Is potently and competitively inhibited by LNB-PUGNAc and LNB-NHAcDNJ in vitro. In terms of biological role, present in the infant gut, this enzyme is involved in the assimilation of type-1 human milk oligosaccharides (HMOs). It hydrolyzes via a retaining mechanism the beta-D-GlcNAc-(1-&gt;3)-beta-D-Gal linkage in lacto-N-tetraose (LNT or beta-D-Gal-(1-&gt;3)-beta-D-GlcNAc-(1-&gt;3)-beta-D-Gal-(1-&gt;4)-D-Glc), an abundant HMO unique to human breast milk, releasing lacto-N-biose (LNB or beta-D-Gal-(1-&gt;3)-D-GlcNAc) and lactose. With a much lower efficiency, is also able to cleave the same linkage in lacto-N-fucopentaose I (alpha-Fuc(1-&gt;2)-beta-D-Gal-(1-&gt;3)-beta-D-GlcNAc(1-&gt;3)-beta-D-Gal-(1-&gt;4)-D-Glc), and sialyllacto-N-tetraose a (alpha-Neu5Ac-(2-&gt;3)-beta-D-Gal-(1-&gt;3)-beta-D-GlcNAc-(1-&gt;3)-beta-D-Gal-(1-&gt;4)-D-Glc). Is a key enzymatic factor for growth and proliferation of B.longum in the gut ecosystem of breast-fed infants. This Bifidobacterium longum subsp. longum (strain ATCC 15707 / DSM 20219 / JCM 1217 / NCTC 11818 / E194b) protein is Lacto-N-biosidase.